A 126-amino-acid chain; its full sequence is UPF0102 protein plu4003 (126 aa).

Belongs to the UPF0102 family.

This Photorhabdus laumondii subsp. laumondii (strain DSM 15139 / CIP 105565 / TT01) (Photorhabdus luminescens subsp. laumondii) protein is UPF0102 protein plu4003.